We begin with the raw amino-acid sequence, 84 residues long: Large ribosomal subunit protein bL27 (84 aa).

The interval 1 to 22 (MAHKKGGGSTKNGRDSNPKYLG) is disordered.

Belongs to the bacterial ribosomal protein bL27 family.

The sequence is that of Large ribosomal subunit protein bL27 from Prosthecochloris aestuarii (strain DSM 271 / SK 413).